The chain runs to 104 residues: UPF0145 protein STH1265 (104 aa).

It belongs to the UPF0145 family.

The protein is UPF0145 protein STH1265 of Symbiobacterium thermophilum (strain DSM 24528 / JCM 14929 / IAM 14863 / T).